We begin with the raw amino-acid sequence, 360 residues long: uncharacterized protein (360 aa).

7 consecutive transmembrane segments (helical) span residues 26 to 48 (SVCYLGSACVSVAVVCVVWSGAT), 58 to 80 (LHPLTSASFSTAIFTFVMCASVL), 89 to 111 (VMGLRAELAITAAILTLGHNIAH), 126 to 148 (LSTGFLVAGAVSMVLVLLMSILA), 169 to 191 (RLAYLFYGLTYVHLSFILLPTAL), 195 to 214 (IPSVVSYVLYTVIFATYALL), and 227 to 249 (CALCSAAVAVSFVAFVLGASHMV).

The protein resides in the cell membrane. This is an uncharacterized protein from Treponema pallidum (strain Nichols).